We begin with the raw amino-acid sequence, 798 residues long: MNLQPIFWIGLISSICCVFAQTDENRCLKANAKSCGECIQAGPNCGWCTNSTFLQEGMPTSARCDDLEALKKKGCPPDDIENPRGSKDIKKNKNVTNRSKGTAEKLKPEDITQIQPQQLVLRLRSGEPQTFTLKFKRAEDYPIDLYYLMDLSYSMKDDLENVKSLGTDLMNEMRRITSDFRIGFGSFVEKTVMPYISTTPVKLRNPCTSEQNCTSPFSYKNVLSLTNKGEVFNELVGKQRISGNLDSPEGGFDAIMQVAVCGSLIGRRNVTRLLVFSTDAGFHFAGDGKLGGIVLPNDGQCHLENNMYTMSHYYDYPSIAHLVQKLSENNIQTIFAVTEEFQPVYKELKNLIPKSAVGTLSANSSNVIQLIIDAYNSLSSEVILENSKLSEGVTISYKSYCKNGVNGTGENGRKCSNISIGDEVQFEISITSNKCPKKDSDSFKIRPLGFTEEVEVILQYICECECQSEGIPESPKCHEGNGTFECGACRCNEGRVGRHCECSTDEVNSEDMDAYCRKENSSEICSNNGECVCGQCVCRKRDNTNEIYSGKFCECDNFNCDRSNGLICGGNGVCKCRVCECNPNYTGSACDCSLDTSTCEASNGQICNGRGICECGVCKCTDPKFQGQTCEMCQTCLGVCAGHKECVQCRAFNKGEKKDTCTQECSYFNITKVESRDKLPQPVQPDPVSHCKEKDVDDCWFYFTYSVNGNNEVMVHVVENPECPTGPDIIPIVAGVVAGIVLIGLALLLIWKLLMIIHDRREFAKFEKEKMNAKWDTGENPIYKSAVTTVVNPKYEGK.

Positions 1–20 (MNLQPIFWIGLISSICCVFA) are cleaved as a signal peptide. Positions 26–76 (RCLKANAKSCGECIQAGPNCGWCTNSTFLQEGMPTSARCDDLEALKKKGCP) constitute a PSI domain. Cystine bridges form between Cys-27/Cys-45, Cys-35/Cys-464, Cys-38/Cys-64, Cys-48/Cys-75, Cys-207/Cys-213, Cys-261/Cys-301, Cys-401/Cys-415, Cys-435/Cys-462, Cys-466/Cys-486, Cys-477/Cys-489, Cys-491/Cys-500, Cys-502/Cys-533, Cys-516/Cys-531, Cys-525/Cys-536, Cys-538/Cys-553, Cys-555/Cys-576, Cys-560/Cys-574, Cys-568/Cys-579, Cys-581/Cys-590, Cys-592/Cys-615, Cys-599/Cys-613, Cys-607/Cys-618, Cys-620/Cys-630, Cys-633/Cys-636, Cys-640/Cys-691, Cys-646/Cys-665, Cys-649/Cys-661, and Cys-699/Cys-723. N-linked (GlcNAc...) asparagine glycosylation is present at Asn-50. The interval 75–107 (CPPDDIENPRGSKDIKKNKNVTNRSKGTAEKLK) is disordered. Over residues 81-91 (ENPRGSKDIKK) the composition is skewed to basic and acidic residues. 2 N-linked (GlcNAc...) asparagine glycosylation sites follow: Asn-94 and Asn-97. The 239-residue stretch at 140–378 (DYPIDLYYLM…QLIIDAYNSL (239 aa)) folds into the VWFA domain. The Mg(2+) site is built by Ser-152 and Ser-154. Residues Ser-154, Asp-157, Asp-158, and Glu-189 each coordinate Ca(2+). Positions 207–213 (CTSEQNC) are CX3CL1-binding. A glycan (N-linked (GlcNAc...) asparagine) is linked at Asn-212. Asn-244, Asp-246, Pro-248, and Glu-249 together coordinate Ca(2+). Glu-249 is a binding site for Mg(2+). Asn-269 carries N-linked (GlcNAc...) asparagine glycosylation. The interval 295-314 (LPNDGQCHLENNMYTMSHYY) is CX3CL1-binding. Ala-362 serves as a coordination point for Ca(2+). N-linked (GlcNAc...) asparagine glycans are attached at residues Asn-363, Asn-406, and Asn-417. Residues 383-465 (ILENSKLSEG…VILQYICECE (83 aa)) are interaction with TMEM182. 4 consecutive I-EGF domains span residues 466-501 (CQSEGIPESPKCHEGNGTFECGACRCNEGRVGRHCE), 502-554 (CSTD…KFCE), 555-591 (CDNFNCDRSNGLICGGNGVCKCRVCECNPNYTGSACD), and 592-631 (CSLDTSTCEASNGQICNGRGICECGVCKCTDPKFQGQTCE). Residue Asn-481 is glycosylated (N-linked (GlcNAc...) asparagine). Asn-520 is a glycosylation site (N-linked (GlcNAc...) asparagine). Asn-584 carries N-linked (GlcNAc...) asparagine glycosylation. Asn-669 is a glycosylation site (N-linked (GlcNAc...) asparagine). The helical transmembrane segment at 729 to 749 (IIPIVAGVVAGIVLIGLALLL) threads the bilayer. The tract at residues 762 to 767 (EFAKFE) is signal for sorting from recycling endosomes; interaction with ACAP1. Thr-777 bears the Phosphothreonine mark. Tyr-783 is subject to Phosphotyrosine. Ser-785 is modified (phosphoserine). Positions 785 to 792 (SAVTTVVN) are interaction with ITGB1BP1. Phosphothreonine is present on Thr-789. An N6-acetyllysine; alternate modification is found at Lys-794. Lys-794 is covalently cross-linked (Glycyl lysine isopeptide (Lys-Gly) (interchain with G-Cter in SUMO1); alternate).

It belongs to the integrin beta chain family. In terms of assembly, interacts with seprase FAP (seprase); the interaction occurs at the cell surface of invadopodia membrane in a collagen-dependent manner. Heterodimer of an alpha and a beta subunit. Beta-1 associates with either alpha-1, alpha-2, alpha-3, alpha-4, alpha-5, alpha-6, alpha-7, alpha-8, alpha-9, alpha-10, alpha-11 or alpha-V. ITGA6:ITGB1 is found in a complex with CD9; interaction takes place in oocytes and is involved in sperm-egg fusion. Binds LGALS3BP and NMRK2, when associated with alpha-7, but not with alpha-5. Interacts with FLNA, FLNB, FLNC and RANBP9. Interacts with KRT1 in the presence of RACK1 and SRC. Interacts with JAML; integrin alpha-4/beta-1 may regulate leukocyte to endothelial cells adhesion by controlling JAML homodimerization. Interacts with RAB21. Interacts (via the cytoplasmic region) with RAB25 (via the hypervariable C-terminal region). Interacts with MYO10. Interacts with ITGB1BP1 (via C-terminal region); the interaction is a prerequisite for focal adhesion disassembly. Interacts with TLN1; the interaction is prevented by competitive binding of ITGB1BP1. Interacts with ACAP1; required for ITGB1 recycling. Interacts with ASAP3. Interacts with FERMT2; the interaction is inhibited in presence of ITGB1BP1. Interacts with DAB2. Interacts with FGR and HCK. Interacts with alpha-7A and alpha-7B in adult skeletal muscle. Interacts with alpha-7B in cardiomyocytes of adult heart. Interacts with EMP2; the interaction may be direct or indirect and ITGB1 has a heterodimer form. ITGA5:ITGB1 interacts with CCN3. ITGA4:ITGB1 is found in a ternary complex with CX3CR1 and CX3CL1. ITGA5:ITGB1 interacts with FBN1. ITGA5:ITGB1 acts as a receptor for fibronectin FN1 and mediates R-G-D-dependent cell adhesion to FN1. ITGA5:ITGB1 interacts with IL1B. Interacts with MDK. ITGA4:ITGB1 interacts with MDK; this interaction mediates MDK-induced osteoblast cells migration through PXN phosphorylation. ITGA6:ITGB1 interacts with MDK; this interaction mediates MDK-induced neurite-outgrowth. ITGA5:ITGB1 interacts with ACE2. Interacts with TMEM182 and LAMB1. Interacts with tensin TNS3; TNS3 also interacts with PEAK1, thus acting as an adapter molecule to bridge the association of PEAK1 with ITGB1. Interacts with tensin TNS4; the interaction displaces tensin TNS3 from the ITGB1 cytoplasmic tail and promotes ITGB1 stability. Integrin ITGA9:ITGB1 interacts with SPP1/OPN (via N-terminus). Integrin ITGA9:ITGB1 interacts with TNC/TNFN3 (via the 3rd Fibronectin type-III domain). Integrins ITGA4:ITGB1 and ITGA9:ITGB1 interact with SVEP1 (via Sushi domain 21); thereby inhibit Ca(2+) intracellular signaling and as a result repress vasocontraction. ITGA4:ITGB1 and ITGA5:ITGB1 interacts with SELP. Interacts with CD248. ITGA5:ITGB1 interacts with IGFBP1. ITGA4:ITGB1 interacts with BCAM. Interacts with ADGRG6.

It is found in the cell membrane. The protein localises to the cell projection. Its subcellular location is the invadopodium membrane. The protein resides in the ruffle membrane. It localises to the recycling endosome. It is found in the melanosome. The protein localises to the lamellipodium. Its subcellular location is the ruffle. The protein resides in the cell junction. It localises to the focal adhesion. In terms of biological role, integrins alpha-1/beta-1, alpha-2/beta-1, alpha-10/beta-1 and alpha-11/beta-1 are receptors for collagen. Integrins alpha-1/beta-1 and alpha-2/beta-2 recognize the proline-hydroxylated sequence G-F-P-G-E-R in collagen. Integrins alpha-2/beta-1, alpha-3/beta-1, alpha-4/beta-1, alpha-5/beta-1, alpha-8/beta-1, alpha-10/beta-1, alpha-11/beta-1 and alpha-V/beta-1 are receptors for fibronectin. Alpha-4/beta-1 recognizes one or more domains within the alternatively spliced CS-1 and CS-5 regions of fibronectin. Integrin alpha-5/beta-1 is a receptor for fibrinogen. Integrin alpha-1/beta-1, alpha-2/beta-1, alpha-6/beta-1 and alpha-7/beta-1 are receptors for lamimin. Integrin alpha-6/beta-1 (ITGA6:ITGB1) is present in oocytes and is involved in sperm-egg fusion. Integrin alpha-4/beta-1 is a receptor for VCAM1 and recognizes the sequence Q-I-D-S in VCAM1. Integrin alpha-9/beta-1 is a receptor for VCAM1, cytotactin and osteopontin. It recognizes the sequence A-E-I-D-G-I-E-L in cytotactin. Integrin alpha-3/beta-1 is a receptor for epiligrin, thrombospondin and CSPG4. Integrin alpha-3/beta-1 provides a docking site for FAP (seprase) at invadopodia plasma membranes in a collagen-dependent manner and hence may participate in the adhesion, formation of invadopodia and matrix degradation processes, promoting cell invasion. Alpha-3/beta-1 may mediate with LGALS3 the stimulation by CSPG4 of endothelial cells migration. Integrin alpha-V/beta-1 is a receptor for vitronectin. Beta-1 integrins recognize the sequence R-G-D in a wide array of ligands. When associated with alpha-7/beta-1 integrin, regulates cell adhesion and laminin matrix deposition. Involved in promoting endothelial cell motility and angiogenesis. Involved in osteoblast compaction through the fibronectin fibrillogenesis cell-mediated matrix assembly process and the formation of mineralized bone nodules. May be involved in up-regulation of the activity of kinases such as PKC via binding to KRT1. Together with KRT1 and RACK1, serves as a platform for SRC activation or inactivation. Plays a mechanistic adhesive role during telophase, required for the successful completion of cytokinesis. ITGA4:ITGB1 binds to fractalkine (CX3CL1) and may act as its coreceptor in CX3CR1-dependent fractalkine signaling. ITGA4:ITGB1 and ITGA5:ITGB1 bind to PLA2G2A via a site (site 2) which is distinct from the classical ligand-binding site (site 1) and this induces integrin conformational changes and enhanced ligand binding to site 1. ITGA5:ITGB1 acts as a receptor for fibrillin-1 (FBN1) and mediates R-G-D-dependent cell adhesion to FBN1. ITGA5:ITGB1 is a receptor for IL1B and binding is essential for IL1B signaling. ITGA5:ITGB3 is a receptor for soluble CD40LG and is required for CD40/CD40LG signaling. Plays an important role in myoblast differentiation and fusion during skeletal myogenesis. ITGA9:ITGB1 may play a crucial role in SVEP1/polydom-mediated myoblast cell adhesion. Integrins ITGA9:ITGB1 and ITGA4:ITGB1 repress PRKCA-mediated L-type voltage-gated channel Ca(2+) influx and ROCK-mediated calcium sensitivity in vascular smooth muscle cells via their interaction with SVEP1, thereby inhibit vasocontraction. This chain is Integrin beta-1 (ITGB1), found in Pongo abelii (Sumatran orangutan).